We begin with the raw amino-acid sequence, 55 residues long: uncharacterized protein (55 aa).

The span at 1–15 (MVGQEQLESSPLCQH) shows a compositional bias: polar residues. Residues 1–26 (MVGQEQLESSPLCQHSDNETETKREC) form a disordered region. Residues 16–26 (SDNETETKREC) are compositionally biased toward basic and acidic residues.

This is an uncharacterized protein from Escherichia coli (strain K12).